We begin with the raw amino-acid sequence, 615 residues long: Prolycopene isomerase, chloroplastic (615 aa).

Residues 1–62 constitute a chloroplast transit peptide; it reads MSTSIFETPL…PKPLNFGFCR (62 aa).

This sequence belongs to the carotenoid/retinoid oxidoreductase family. CrtISO subfamily. Requires NAD(+) as cofactor. It depends on NADP(+) as a cofactor. FAD serves as cofactor.

It is found in the plastid. The protein resides in the chloroplast membrane. It catalyses the reaction 7,7',9,9'-tetra-cis-lycopene = all-trans-lycopene. It functions in the pathway carotenoid biosynthesis; lycopene biosynthesis. Its function is as follows. Carotene cis-trans-isomerase that converts 7,9,9'-tri-cis-neurosporene to 9'-cis-neurosporene and 7,9,9',7'-tetra-cis-lycopene (also known as prolycopene) into all-trans-lycopene. Isomerization requires redox-active components, suggesting that isomerization is achieved by a reversible redox reaction acting at specific double bonds. Isomerizes adjacent cis-double bonds at C7 and C9 pairwise into the trans-configuration, but is incapable of isomerizing single cis-double bonds at C9 and C9'. The protein is Prolycopene isomerase, chloroplastic (CRTISO) of Daucus carota (Wild carrot).